Here is a 102-residue protein sequence, read N- to C-terminus: Large ribosomal subunit protein uL23c (102 aa).

This sequence belongs to the universal ribosomal protein uL23 family. In terms of assembly, part of the 50S ribosomal subunit.

It is found in the plastid. It localises to the chloroplast. Binds to 23S rRNA. The protein is Large ribosomal subunit protein uL23c (rpl23) of Trieres chinensis (Marine centric diatom).